We begin with the raw amino-acid sequence, 315 residues long: tRNA dimethylallyltransferase (315 aa).

9 to 16 is an ATP binding site; sequence GPTASGKT. 11-16 lines the substrate pocket; it reads TASGKT. Interaction with substrate tRNA stretches follow at residues 34–37 and 158–162; these read DSLL and QRIQR.

Belongs to the IPP transferase family. In terms of assembly, monomer. The cofactor is Mg(2+).

The enzyme catalyses adenosine(37) in tRNA + dimethylallyl diphosphate = N(6)-dimethylallyladenosine(37) in tRNA + diphosphate. Functionally, catalyzes the transfer of a dimethylallyl group onto the adenine at position 37 in tRNAs that read codons beginning with uridine, leading to the formation of N6-(dimethylallyl)adenosine (i(6)A). The chain is tRNA dimethylallyltransferase from Acidithiobacillus ferrooxidans (strain ATCC 53993 / BNL-5-31) (Leptospirillum ferrooxidans (ATCC 53993)).